Here is a 698-residue protein sequence, read N- to C-terminus: Ubiquitin-like modifier-activating enzyme ATG7 (698 aa).

The short motif at 11–13 (FAP) is the FAP motif element. K41 is covalently cross-linked (Glycyl lysine isopeptide (Lys-Gly) (interchain with G-Cter in ubiquitin)). The Glycyl thioester intermediate role is filled by C567. S693 carries the phosphoserine modification.

Belongs to the ATG7 family. In terms of assembly, homodimer. Interacts with ATG3; this interaction is essential for the transfer of ATG8-like proteins's thioester from ATG7 to ATG3 and plays a role in the conjugation of ATG12 to ATG5. Interacts with ATG12. Interacts with ATG10. Forms intermediate conjugates with GABARAPL1. Forms intermediate conjugates with ATG8-like proteins such as GABARAP, GABARAPL2 or MAP1LC3A. Interacts with EP300 acetyltransferase. Interacts with FOXO1. Post-translationally, acetylated by EP300. In terms of processing, polyubiquitinated on Lys-41 via 'Lys-63'-linked ubiquitin by TRIM32; this modification positiely regulates ATG8 and ATG12 activating enzyme activity leading to initiation of autophagy under metabolic stress. In terms of tissue distribution, widely expressed, especially in kidney, liver, lymph nodes and bone marrow.

Its subcellular location is the cytoplasm. It localises to the preautophagosomal structure. E1-like activating enzyme involved in the 2 ubiquitin-like systems required for cytoplasm to vacuole transport (Cvt) and autophagy. Activates ATG12 for its conjugation with ATG5 as well as the ATG8 family proteins for their conjugation with phosphatidylethanolamine. Both systems are needed for the ATG8 association to Cvt vesicles and autophagosomes membranes. Facilitates LC3-I lipidation with phosphatidylethanolamine to form LC3-II which is found on autophagosomal membranes. Required for autophagic death induced by caspase-8 inhibition. Required for mitophagy which contributes to regulate mitochondrial quantity and quality by eliminating the mitochondria to a basal level to fulfill cellular energy requirements and preventing excess ROS production. Modulates p53/TP53 activity to regulate cell cycle and survival during metabolic stress. Also plays a key role in the maintenance of axonal homeostasis, the prevention of axonal degeneration, the maintenance of hematopoietic stem cells, the formation of Paneth cell granules, as well as in adipose differentiation. Plays a role in regulating the liver clock and glucose metabolism by mediating the autophagic degradation of CRY1 (clock repressor) in a time-dependent manner. The sequence is that of Ubiquitin-like modifier-activating enzyme ATG7 from Mus musculus (Mouse).